The sequence spans 275 residues: Dermonecrotic toxin LhSicTox-alphaVI1i (275 aa).

Histidine 5 is an active-site residue. Positions 25 and 27 each coordinate Mg(2+). Histidine 41 acts as the Nucleophile in catalysis. Intrachain disulfides connect cysteine 45-cysteine 51 and cysteine 47-cysteine 192. Aspartate 85 lines the Mg(2+) pocket.

It belongs to the arthropod phospholipase D family. Class II subfamily. The cofactor is Mg(2+). As to expression, expressed by the venom gland.

Its subcellular location is the secreted. The enzyme catalyses an N-(acyl)-sphingosylphosphocholine = an N-(acyl)-sphingosyl-1,3-cyclic phosphate + choline. The catalysed reaction is an N-(acyl)-sphingosylphosphoethanolamine = an N-(acyl)-sphingosyl-1,3-cyclic phosphate + ethanolamine. It catalyses the reaction a 1-acyl-sn-glycero-3-phosphocholine = a 1-acyl-sn-glycero-2,3-cyclic phosphate + choline. It carries out the reaction a 1-acyl-sn-glycero-3-phosphoethanolamine = a 1-acyl-sn-glycero-2,3-cyclic phosphate + ethanolamine. Its function is as follows. Dermonecrotic toxins cleave the phosphodiester linkage between the phosphate and headgroup of certain phospholipids (sphingolipid and lysolipid substrates), forming an alcohol (often choline) and a cyclic phosphate. This toxin acts on sphingomyelin (SM). It may also act on ceramide phosphoethanolamine (CPE), lysophosphatidylcholine (LPC) and lysophosphatidylethanolamine (LPE), but not on lysophosphatidylserine (LPS), and lysophosphatidylglycerol (LPG). It acts by transphosphatidylation, releasing exclusively cyclic phosphate products as second products. Induces dermonecrosis, hemolysis, increased vascular permeability, edema, inflammatory response, and platelet aggregation. This chain is Dermonecrotic toxin LhSicTox-alphaVI1i, found in Loxosceles hirsuta (Recluse spider).